We begin with the raw amino-acid sequence, 102 residues long: Small ribosomal subunit protein uS10 (102 aa).

The protein belongs to the universal ribosomal protein uS10 family. Part of the 30S ribosomal subunit.

Its function is as follows. Involved in the binding of tRNA to the ribosomes. This is Small ribosomal subunit protein uS10 from Streptococcus equi subsp. zooepidemicus (strain MGCS10565).